The sequence spans 151 residues: Neuroglobin (151 aa).

A Globin domain is found at 1-149 (MERPEPELIR…VVQAMSRGWD (149 aa)). The heme b site is built by His64 and His96.

Belongs to the globin family. Monomer. Homodimer and homotetramer; disulfide-linked. Mainly monomeric but also detected as part of homodimers and homotetramers. Interacts with 14-3-3 proteins; regulates the phosphorylation of NGB. Could interact (ferrous form) with G-alpha(i) proteins (GTP-bound form). In terms of processing, phosphorylated during hypoxia by ERK1/ERK2. Phosphorylation regulates the heme pocket hexacoordination preventing the association of His-64 with the heme metal center. Thereby, promotes the access of dioxygen and nitrite to the heme and stimulates the nitrite reductase activity. Phosphorylation during hypoxia is stabilized by 14-3-3 proteins.

The protein resides in the cytoplasm. Its subcellular location is the cytosol. The protein localises to the mitochondrion matrix. It catalyses the reaction Fe(III)-heme b-[protein] + nitric oxide + H2O = Fe(II)-heme b-[protein] + nitrite + 2 H(+). Monomeric globin with a bis-histidyl six-coordinate heme-iron atom through which it can bind dioxygen, carbon monoxide and nitric oxide. Could help transport oxygen and increase its availability to the metabolically active neuronal tissues, though its low quantity in tissues as well as its high affinity for dioxygen, which may limit its oxygen-releasing ability, argue against it. The ferrous/deoxygenated form exhibits a nitrite reductase activity and it could produce nitric oxide which in turn inhibits cellular respiration in response to hypoxia. In its ferrous/deoxygenated state, it may also exhibit GDI (Guanine nucleotide Dissociation Inhibitor) activity toward heterotrimeric G-alpha proteins, thereby regulating signal transduction to facilitate neuroprotective responses in the wake of hypoxia and associated oxidative stress. The protein is Neuroglobin of Macaca mulatta (Rhesus macaque).